A 350-amino-acid chain; its full sequence is NADH-quinone oxidoreductase subunit H (350 aa).

A run of 8 helical transmembrane segments spans residues 31–51, 102–122, 132–152, 171–191, 205–225, 263–283, 286–306, and 322–342; these read LMLLAVVGVLAFLFLNALFLI, LLAPVLIFTIPVMLFLVIPFG, LGVLYLVAITSVETIVLWMAG, MLSYEMPVILAMLSVVMMAGS, WFIFLQPVGFLIYFIAVNAEF, FMIGAIMVTTLFLGGWNAPFG, FIPSWLWFIIKMYFVITLYMW, and FAWKFLLPVSLANIFITGFGL.

Belongs to the complex I subunit 1 family. In terms of assembly, NDH-1 is composed of 14 different subunits. Subunits NuoA, H, J, K, L, M, N constitute the membrane sector of the complex.

Its subcellular location is the cell membrane. It catalyses the reaction a quinone + NADH + 5 H(+)(in) = a quinol + NAD(+) + 4 H(+)(out). Functionally, NDH-1 shuttles electrons from NADH, via FMN and iron-sulfur (Fe-S) centers, to quinones in the respiratory chain. The immediate electron acceptor for the enzyme in this species is believed to be ubiquinone. Couples the redox reaction to proton translocation (for every two electrons transferred, four hydrogen ions are translocated across the cytoplasmic membrane), and thus conserves the redox energy in a proton gradient. This subunit may bind ubiquinone. The polypeptide is NADH-quinone oxidoreductase subunit H (Carboxydothermus hydrogenoformans (strain ATCC BAA-161 / DSM 6008 / Z-2901)).